The primary structure comprises 119 residues: Dihydroneopterin aldolase (119 aa).

Substrate is bound by residues E21, Y53, and 72 to 73; that span reads ID. The active-site Proton donor/acceptor is the K99.

The protein belongs to the DHNA family.

It catalyses the reaction 7,8-dihydroneopterin = 6-hydroxymethyl-7,8-dihydropterin + glycolaldehyde. It functions in the pathway cofactor biosynthesis; tetrahydrofolate biosynthesis; 2-amino-4-hydroxy-6-hydroxymethyl-7,8-dihydropteridine diphosphate from 7,8-dihydroneopterin triphosphate: step 3/4. Its function is as follows. Catalyzes the conversion of 7,8-dihydroneopterin to 6-hydroxymethyl-7,8-dihydropterin. The polypeptide is Dihydroneopterin aldolase (folB) (Streptococcus pyogenes).